We begin with the raw amino-acid sequence, 187 residues long: Cytochrome b-245 chaperone 1 (187 aa).

A helical transmembrane segment spans residues 20–42 (GIRSWSLLVGILSIGLAAAYYSG). S168 carries the phosphoserine modification.

It belongs to the CYBC1 family. Interacts with CYBB; CYBC1 may act as a chaperone stabilizing Cytochrome b-245 heterodimer.

The protein resides in the endoplasmic reticulum membrane. Functionally, functions as a chaperone necessary for a stable expression of the CYBA and CYBB subunits of the cytochrome b-245 heterodimer. Controls the phagocyte respiratory burst and is essential for innate immunity. The sequence is that of Cytochrome b-245 chaperone 1 from Bos taurus (Bovine).